The chain runs to 130 residues: Small ribosomal subunit protein uS8 (130 aa).

It belongs to the universal ribosomal protein uS8 family. As to quaternary structure, part of the 30S ribosomal subunit.

Functionally, one of the primary rRNA binding proteins, it binds directly to 16S rRNA central domain where it helps coordinate assembly of the platform of the 30S subunit. The protein is Small ribosomal subunit protein uS8 of Thermococcus onnurineus (strain NA1).